Here is a 570-residue protein sequence, read N- to C-terminus: Protein translocase subunit SecD (570 aa).

Residues 104 to 117 (GANATGTPSASETG) show a composition bias toward polar residues. Residues 104-198 (GANATGTPSA…SASASGDDAT (95 aa)) form a disordered region. Over residues 122–146 (KATDKATDKATDKATDGDKATDGDK) the composition is skewed to basic and acidic residues. 2 stretches are compositionally biased toward low complexity: residues 147–161 (ASGTPSDSASASATS) and 172–196 (ADPSPSATSSDGASPSPSASASGDD). Helical transmembrane passes span 370-390 (AGLIAGAIGLALVVLYLLFYY), 395-415 (FIAVCSLLVSAGLTYVIMALL), 419-439 (IGFALNLPAVCGAIVAIGITA), 474-494 (ILVSDFVSFLAAAVLFIVTVG), and 498-518 (GFAFTLGLTTLLDVVVVFLFT). A disordered region spans residues 540–570 (LDPKALGAKPPLRRTRRPSRPAAGPVDPKEA).

It belongs to the SecD/SecF family. SecD subfamily. In terms of assembly, forms a complex with SecF. Part of the essential Sec protein translocation apparatus which comprises SecA, SecYEG and auxiliary proteins SecDF. Other proteins may also be involved.

Its subcellular location is the cell membrane. Functionally, part of the Sec protein translocase complex. Interacts with the SecYEG preprotein conducting channel. SecDF uses the proton motive force (PMF) to complete protein translocation after the ATP-dependent function of SecA. The chain is Protein translocase subunit SecD from Streptomyces coelicolor (strain ATCC BAA-471 / A3(2) / M145).